The following is a 481-amino-acid chain: Halobacterial transducer protein 9 (481 aa).

The 72-residue stretch at 10-81 folds into the PAS domain; that stretch reads SPFTVPLLLN…NKVADTPIDA (72 aa). The region spanning 208–444 is the Methyl-accepting transducer domain; that stretch reads DVERLEAASQ…EIAAMVDETA (237 aa).

It belongs to the methyl-accepting chemotaxis (MCP) protein family.

The protein localises to the cytoplasm. Its function is as follows. Potentially involved in chemo- or phototactic signal transduction. The polypeptide is Halobacterial transducer protein 9 (htr9) (Halobacterium salinarum (strain ATCC 700922 / JCM 11081 / NRC-1) (Halobacterium halobium)).